The chain runs to 293 residues: 33 kDa chaperonin (293 aa).

2 cysteine pairs are disulfide-bonded: cysteine 237–cysteine 239 and cysteine 271–cysteine 274.

This sequence belongs to the HSP33 family. Under oxidizing conditions two disulfide bonds are formed involving the reactive cysteines. Under reducing conditions zinc is bound to the reactive cysteines and the protein is inactive.

Its subcellular location is the cytoplasm. Functionally, redox regulated molecular chaperone. Protects both thermally unfolding and oxidatively damaged proteins from irreversible aggregation. Plays an important role in the bacterial defense system toward oxidative stress. The chain is 33 kDa chaperonin from Haemophilus influenzae (strain 86-028NP).